The sequence spans 404 residues: cAMP-dependent protein kinase regulatory subunit (404 aa).

The segment at 14–144 is dimerization and phosphorylation; it reads LTDHELLRIP…RLKTAIAGNF (131 aa). Ser105 bears the Phosphoserine mark. Residues 145–276, Glu223, Arg232, 277–398, Glu344, and Arg353 contribute to the 3',5'-cyclic AMP site; these read LFSH…EKFP and CCRH…GVEE.

Belongs to the cAMP-dependent kinase regulatory chain family. As to quaternary structure, tetramer, composed of 2 regulatory (R) and 2 catalytic (C) subunits. In the presence of cAMP it dissociates into 2 active monomeric C subunits and an R dimer.

Its function is as follows. cAMP-dependent protein kinase PKA regulatory subunit. The polypeptide is cAMP-dependent protein kinase regulatory subunit (PKAR) (Colletotrichum trifolii).